A 533-amino-acid chain; its full sequence is Amidophosphoribosyltransferase (533 aa).

Cys2 (nucleophile) is an active-site residue. A Glutamine amidotransferase type-2 domain is found at 2–238 (CGILALMLAD…PGECVFIRRS (237 aa)). Asp383 and Asp384 together coordinate Mg(2+). Ser506 is modified (phosphoserine).

It in the C-terminal section; belongs to the purine/pyrimidine phosphoribosyltransferase family. The cofactor is Mg(2+).

The enzyme catalyses 5-phospho-beta-D-ribosylamine + L-glutamate + diphosphate = 5-phospho-alpha-D-ribose 1-diphosphate + L-glutamine + H2O. It participates in purine metabolism; IMP biosynthesis via de novo pathway; N(1)-(5-phospho-D-ribosyl)glycinamide from 5-phospho-alpha-D-ribose 1-diphosphate: step 1/2. The polypeptide is Amidophosphoribosyltransferase (ade4) (Schizosaccharomyces pombe (strain 972 / ATCC 24843) (Fission yeast)).